The sequence spans 1685 residues: Collagen alpha-5(IV) chain (1685 aa).

An N-terminal signal peptide occupies residues 1–26 (MKLRGVSLAAGLFLLALSLWGQPAEA). Residues 27-41 (AACYGCSPGSKCDCS) are nonhelical region (NC2). The tract at residues 42–1456 (GIKGEKGERG…QGPPGPPGTS (1415 aa)) is triple-helical region. The interval 49–1459 (ERGFPGLEGH…PGPPGTSSVA (1411 aa)) is disordered. Low complexity predominate over residues 52–61 (FPGLEGHPGL). Pro residues predominate over residues 62-73 (PGFPGPEGPPGP). Asparagine 125 is a glycosylation site (N-linked (GlcNAc...) asparagine). Pro residues predominate over residues 188-212 (TGIPGPIGPPGPPGLMGPPGPPGLP). Residues 214 to 225 (PKGNMGLNFQGP) show a composition bias toward low complexity. Positions 246-257 (EQKRPIDVEFQK) are enriched in basic and acidic residues. The span at 266-281 (RGPPGPPGIRGPPGPP) shows a compositional bias: pro residues. 2 stretches are compositionally biased toward basic and acidic residues: residues 284–305 (EKGE…KDGE) and 324–333 (PGRDGEKGQK). A compositionally biased stretch (low complexity) spans 413–430 (PPGISIPGPPGLDGQPGA). Composition is skewed to pro residues over residues 431 to 445 (PGLP…PHIP), 493 to 505 (PGQP…PGPP), 620 to 630 (MGPPGFGPPGP), and 709 to 727 (PGPP…PGAP). A compositionally biased stretch (low complexity) spans 788-797 (RTGLDGLPGP). Composition is skewed to pro residues over residues 848–859 (PGPPGLDVPGPP) and 868–880 (PGAP…PGSP). 5 stretches are compositionally biased toward low complexity: residues 882 to 901 (LPGK…MGMM), 912 to 931 (IPGR…QGQP), 983 to 999 (YQGL…SGQP), 1010 to 1026 (NPGL…PGLK), and 1111 to 1120 (TPGAKGQPGL). The span at 1139–1148 (PGNPGLPGEP) shows a compositional bias: pro residues. 2 stretches are compositionally biased toward gly residues: residues 1149–1158 (GPVGGGGHPG) and 1202–1211 (GQKGDGGLPG). Composition is skewed to pro residues over residues 1234–1243 (QGPPGPPGSP) and 1256–1274 (PQGP…PPGL). The segment covering 1295–1308 (LPGLKGDQGPPGLQ) has biased composition (low complexity). Over residues 1353-1362 (IGPPGPPGLP) the composition is skewed to pro residues. The 225-residue stretch at 1461-1685 (GFLITRHSQT…SRCQVCMKRT (225 aa)) folds into the Collagen IV NC1 domain. 6 cysteine pairs are disulfide-bonded: cysteine 1476–cysteine 1567, cysteine 1509–cysteine 1564, cysteine 1521–cysteine 1527, cysteine 1586–cysteine 1681, cysteine 1620–cysteine 1678, and cysteine 1632–cysteine 1638. Methionine 1549 is covalently cross-linked (S-Lysyl-methionine sulfilimine (Met-Lys) (interchain with K-1667)). An S-Lysyl-methionine sulfilimine (Lys-Met) (interchain with M-1549) cross-link involves residue lysine 1667.

It belongs to the type IV collagen family. As to quaternary structure, there are six type IV collagen isoforms, alpha 1(IV)-alpha 6(IV), each of which can form a triple helix structure with 2 other chains to generate type IV collagen network. Prolines at the third position of the tripeptide repeating unit (G-X-Y) are hydroxylated in some or all of the chains. In terms of processing, type IV collagens contain numerous cysteine residues which are involved in inter- and intramolecular disulfide bonding. 12 of these, located in the NC1 domain, are conserved in all known type IV collagens. Post-translationally, the trimeric structure of the NC1 domains is stabilized by covalent bonds between Lys and Met residues. Isoform 2 is found in kidney.

The protein localises to the secreted. It localises to the extracellular space. Its subcellular location is the extracellular matrix. It is found in the basement membrane. Type IV collagen is the major structural component of glomerular basement membranes (GBM), forming a 'chicken-wire' meshwork together with laminins, proteoglycans and entactin/nidogen. The polypeptide is Collagen alpha-5(IV) chain (COL4A5) (Homo sapiens (Human)).